The following is a 147-amino-acid chain: Transthyretin (147 aa).

Positions M1–A20 are cleaved as a signal peptide. C30 bears the Sulfocysteine mark. K35 contacts L-thyroxine. Position 62 is a 4-carboxyglutamate (E62). S72 bears the Phosphoserine mark. E74 is an L-thyroxine binding site. An N-linked (GlcNAc...) asparagine glycan is attached at N118. An L-thyroxine-binding site is contributed by S137.

The protein belongs to the transthyretin family. Homotetramer. Dimer of dimers. In the homotetramer, subunits assemble around a central channel that can accommodate two ligand molecules. Interacts with RBP4. Post-translationally, sulfonation of the reactive cysteine Cys-30 enhances the stability of the native conformation of TTR, avoiding misassembly of the protein leading to amyloid formation. Detected in serum and cerebrospinal fluid (at protein level). Highly expressed in the choroid plexus. Detected at lower levels in the liver.

The protein localises to the secreted. In terms of biological role, thyroid hormone-binding protein. Probably transports thyroxine from the bloodstream to the brain. This is Transthyretin (Ttr) from Rattus norvegicus (Rat).